Reading from the N-terminus, the 750-residue chain is Photosystem I P700 chlorophyll a apoprotein A1 (750 aa).

The next 8 membrane-spanning stretches (helical) occupy residues 70–93, 156–179, 195–219, 291–309, 346–369, 385–411, 433–455, and 531–549; these read VFSAHFGQLSIIFLWLSGMYFHGA, LYCTAIGALVFAALMLFAGWFHYH, LNHHLAGLLGLGSLSWAGHQVHVSL, IAHHHLAIAILFLIAGHMY, WHAQLSLNLAMLGSLTIVVAHHMY, LSLFTHHMWIGGFLIVGAAAHAAIFMV, AIISHLNWACIFLGFHSFGLYIH, and FLVHHIHAFTIHVTVLILL. [4Fe-4S] cluster contacts are provided by C573 and C582. Helical transmembrane passes span 589-610 and 664-686; these read HVFLGLFWMYNSISVVIFHFSW and LSAYGLFFLGAHFVWAFSLMFLF. Position 675 (H675) interacts with chlorophyll a'. Positions 683 and 691 each coordinate chlorophyll a. W692 provides a ligand contact to phylloquinone. A helical membrane pass occupies residues 724-744; that stretch reads AVGVTHYLLGGIATTWAFFLA.

This sequence belongs to the PsaA/PsaB family. In terms of assembly, the PsaA/B heterodimer binds the P700 chlorophyll special pair and subsequent electron acceptors. PSI consists of a core antenna complex that captures photons, and an electron transfer chain that converts photonic excitation into a charge separation. The eukaryotic PSI reaction center is composed of at least 11 subunits. P700 is a chlorophyll a/chlorophyll a' dimer, A0 is one or more chlorophyll a, A1 is one or both phylloquinones and FX is a shared 4Fe-4S iron-sulfur center. serves as cofactor.

The protein localises to the plastid. Its subcellular location is the chloroplast thylakoid membrane. It catalyses the reaction reduced [plastocyanin] + hnu + oxidized [2Fe-2S]-[ferredoxin] = oxidized [plastocyanin] + reduced [2Fe-2S]-[ferredoxin]. PsaA and PsaB bind P700, the primary electron donor of photosystem I (PSI), as well as the electron acceptors A0, A1 and FX. PSI is a plastocyanin-ferredoxin oxidoreductase, converting photonic excitation into a charge separation, which transfers an electron from the donor P700 chlorophyll pair to the spectroscopically characterized acceptors A0, A1, FX, FA and FB in turn. Oxidized P700 is reduced on the lumenal side of the thylakoid membrane by plastocyanin. In Jasminum nudiflorum (Winter jasmine), this protein is Photosystem I P700 chlorophyll a apoprotein A1.